The primary structure comprises 221 residues: Pectate lyase C (221 aa).

An N-terminal signal peptide occupies residues 1–28; sequence MKRLAGTVILSGLLVCGFGQALPEKALA.

This sequence belongs to the polysaccharide lyase 3 family. Ca(2+) is required as a cofactor.

It is found in the secreted. The enzyme catalyses Eliminative cleavage of (1-&gt;4)-alpha-D-galacturonan to give oligosaccharides with 4-deoxy-alpha-D-galact-4-enuronosyl groups at their non-reducing ends.. The catalysed reaction is Eliminative cleavage of (1-&gt;4)-alpha-D-galacturonan methyl ester to give oligosaccharides with 4-deoxy-6-O-methyl-alpha-D-galact-4-enuronosyl groups at their non-reducing ends.. The protein operates within glycan metabolism; pectin degradation; 2-dehydro-3-deoxy-D-gluconate from pectin: step 2/5. Its function is as follows. Catalyzes the depolymerization of both polygalacturonate and pectins of methyl esterification degree from 22 to 89%, with an endo mode of action. In contrast to the majority of pectate lyases, displays high activity on highly methylated pectins. In Bacillus licheniformis (strain ATCC 14580 / DSM 13 / JCM 2505 / CCUG 7422 / NBRC 12200 / NCIMB 9375 / NCTC 10341 / NRRL NRS-1264 / Gibson 46), this protein is Pectate lyase C (pelC).